The sequence spans 465 residues: 23S rRNA (uracil(1939)-C(5))-methyltransferase RlmD (465 aa).

Residues 1–20 (MSEAVPLSTPGASHAGAATD) form a disordered region. In terms of domain architecture, TRAM spans 12-80 (ASHAGAATDR…PTYEQAQVVD (69 aa)). Cysteine 93, cysteine 99, cysteine 102, and cysteine 181 together coordinate [4Fe-4S] cluster. Residues glutamine 289, phenylalanine 318, asparagine 323, glutamate 339, asparagine 367, and aspartate 388 each contribute to the S-adenosyl-L-methionine site. Cysteine 421 serves as the catalytic Nucleophile.

The protein belongs to the class I-like SAM-binding methyltransferase superfamily. RNA M5U methyltransferase family. RlmD subfamily.

The catalysed reaction is uridine(1939) in 23S rRNA + S-adenosyl-L-methionine = 5-methyluridine(1939) in 23S rRNA + S-adenosyl-L-homocysteine + H(+). Its function is as follows. Catalyzes the formation of 5-methyl-uridine at position 1939 (m5U1939) in 23S rRNA. This is 23S rRNA (uracil(1939)-C(5))-methyltransferase RlmD from Burkholderia thailandensis (strain ATCC 700388 / DSM 13276 / CCUG 48851 / CIP 106301 / E264).